The primary structure comprises 131 residues: Small ribosomal subunit protein uS8 (131 aa).

Belongs to the universal ribosomal protein uS8 family. Part of the 30S ribosomal subunit. Contacts proteins S5 and S12.

One of the primary rRNA binding proteins, it binds directly to 16S rRNA central domain where it helps coordinate assembly of the platform of the 30S subunit. This Acidovorax sp. (strain JS42) protein is Small ribosomal subunit protein uS8.